A 261-amino-acid polypeptide reads, in one-letter code: Leucyl/phenylalanyl-tRNA--protein transferase (261 aa).

Belongs to the L/F-transferase family.

The protein localises to the cytoplasm. It carries out the reaction N-terminal L-lysyl-[protein] + L-leucyl-tRNA(Leu) = N-terminal L-leucyl-L-lysyl-[protein] + tRNA(Leu) + H(+). It catalyses the reaction N-terminal L-arginyl-[protein] + L-leucyl-tRNA(Leu) = N-terminal L-leucyl-L-arginyl-[protein] + tRNA(Leu) + H(+). The enzyme catalyses L-phenylalanyl-tRNA(Phe) + an N-terminal L-alpha-aminoacyl-[protein] = an N-terminal L-phenylalanyl-L-alpha-aminoacyl-[protein] + tRNA(Phe). Functionally, functions in the N-end rule pathway of protein degradation where it conjugates Leu, Phe and, less efficiently, Met from aminoacyl-tRNAs to the N-termini of proteins containing an N-terminal arginine or lysine. This is Leucyl/phenylalanyl-tRNA--protein transferase from Yersinia pestis bv. Antiqua (strain Antiqua).